Here is a 241-residue protein sequence, read N- to C-terminus: Biosynthetic peptidoglycan transglycosylase (241 aa).

The chain crosses the membrane as a helical span at residues 19 to 39 (AILAVLGVWIAGILLFSVMPV).

It belongs to the glycosyltransferase 51 family.

The protein localises to the cell inner membrane. The enzyme catalyses [GlcNAc-(1-&gt;4)-Mur2Ac(oyl-L-Ala-gamma-D-Glu-L-Lys-D-Ala-D-Ala)](n)-di-trans,octa-cis-undecaprenyl diphosphate + beta-D-GlcNAc-(1-&gt;4)-Mur2Ac(oyl-L-Ala-gamma-D-Glu-L-Lys-D-Ala-D-Ala)-di-trans,octa-cis-undecaprenyl diphosphate = [GlcNAc-(1-&gt;4)-Mur2Ac(oyl-L-Ala-gamma-D-Glu-L-Lys-D-Ala-D-Ala)](n+1)-di-trans,octa-cis-undecaprenyl diphosphate + di-trans,octa-cis-undecaprenyl diphosphate + H(+). It functions in the pathway cell wall biogenesis; peptidoglycan biosynthesis. Functionally, peptidoglycan polymerase that catalyzes glycan chain elongation from lipid-linked precursors. The sequence is that of Biosynthetic peptidoglycan transglycosylase from Cronobacter sakazakii (strain ATCC BAA-894) (Enterobacter sakazakii).